We begin with the raw amino-acid sequence, 188 residues long: Ribosomal RNA small subunit methyltransferase G (188 aa).

S-adenosyl-L-methionine contacts are provided by residues glycine 69, phenylalanine 74, 119-120 (VQ), and arginine 134.

It belongs to the methyltransferase superfamily. RNA methyltransferase RsmG family.

It localises to the cytoplasm. The enzyme catalyses guanosine(527) in 16S rRNA + S-adenosyl-L-methionine = N(7)-methylguanosine(527) in 16S rRNA + S-adenosyl-L-homocysteine. Its function is as follows. Specifically methylates the N7 position of guanine in position 527 of 16S rRNA. This Campylobacter jejuni subsp. jejuni serotype O:23/36 (strain 81-176) protein is Ribosomal RNA small subunit methyltransferase G.